Here is a 542-residue protein sequence, read N- to C-terminus: CTP synthase (542 aa).

Residues 1-265 form an amidoligase domain region; that stretch reads MTRYIFVTGG…DEIIVERFGL (265 aa). Ser-13 contributes to the CTP binding site. Residue Ser-13 coordinates UTP. Residues 14–19 and Asp-71 contribute to the ATP site; that span reads SLGKGI. Residues Asp-71 and Glu-139 each coordinate Mg(2+). CTP-binding positions include 146–148, 186–191, and Lys-222; these read DIE and KTKPTQ. Residues 186–191 and Lys-222 each bind UTP; that span reads KTKPTQ. The 252-residue stretch at 290-541 folds into the Glutamine amidotransferase type-1 domain; that stretch reads TIAMVGKYME…VRAALENAGG (252 aa). Residue Gly-351 participates in L-glutamine binding. Residue Cys-378 is the Nucleophile; for glutamine hydrolysis of the active site. Residues 379-382, Glu-402, and Arg-469 contribute to the L-glutamine site; that span reads LGLQ. Catalysis depends on residues His-514 and Glu-516.

The protein belongs to the CTP synthase family. In terms of assembly, homotetramer.

It carries out the reaction UTP + L-glutamine + ATP + H2O = CTP + L-glutamate + ADP + phosphate + 2 H(+). The enzyme catalyses L-glutamine + H2O = L-glutamate + NH4(+). The catalysed reaction is UTP + NH4(+) + ATP = CTP + ADP + phosphate + 2 H(+). It participates in pyrimidine metabolism; CTP biosynthesis via de novo pathway; CTP from UDP: step 2/2. Allosterically activated by GTP, when glutamine is the substrate; GTP has no effect on the reaction when ammonia is the substrate. The allosteric effector GTP functions by stabilizing the protein conformation that binds the tetrahedral intermediate(s) formed during glutamine hydrolysis. Inhibited by the product CTP, via allosteric rather than competitive inhibition. Functionally, catalyzes the ATP-dependent amination of UTP to CTP with either L-glutamine or ammonia as the source of nitrogen. Regulates intracellular CTP levels through interactions with the four ribonucleotide triphosphates. The chain is CTP synthase from Hahella chejuensis (strain KCTC 2396).